The sequence spans 603 residues: Dual specificity protein phosphatase CDC14A (603 aa).

The a stretch occupies residues 7–162; it reads ELIGACEFMK…GLQHGFFDFE (156 aa). Residues 163 to 176 form a linker region; that stretch reads TFDAEEYEHYERVE. Positions 177–343 are b; the sequence is NGDFNWIVPG…QGDIFRSKLK (167 aa). Residues 179–336 enclose the Tyrosine-protein phosphatase domain; it reads DFNWIVPGKF…KQASLWVQGD (158 aa). The active-site Phosphocysteine intermediate is Cys278. Ser484 bears the Phosphoserine mark. Residues 518–538 are compositionally biased toward polar residues; the sequence is NGSTQTPGRNYPELNNNQYTR. The tract at residues 518–583 is disordered; it reads NGSTQTPGRN…RPSFPGSLSS (66 aa). Low complexity-rich tracts occupy residues 539 to 558 and 573 to 583; these read SSNS…LNSS and LRPSFPGSLSS. Ser592 is subject to Phosphoserine.

This sequence belongs to the protein-tyrosine phosphatase family. Non-receptor class CDC14 subfamily. Interacts with KIF20A. Interaction is required to localize CDC14 to the midzone of the mitotic spindle. Expressed in the inner ear.

The protein localises to the nucleus. It is found in the cytoplasm. It localises to the cytoskeleton. The protein resides in the microtubule organizing center. Its subcellular location is the centrosome. The protein localises to the spindle. It is found in the cell projection. It localises to the kinocilium. The protein resides in the spindle pole. Its subcellular location is the stereocilium. The catalysed reaction is O-phospho-L-tyrosyl-[protein] + H2O = L-tyrosyl-[protein] + phosphate. The enzyme catalyses O-phospho-L-seryl-[protein] + H2O = L-seryl-[protein] + phosphate. It catalyses the reaction O-phospho-L-threonyl-[protein] + H2O = L-threonyl-[protein] + phosphate. Functionally, dual-specificity phosphatase. Required for centrosome separation and productive cytokinesis during cell division. Dephosphorylates SIRT2 around early anaphase. May dephosphorylate the APC subunit FZR1/CDH1, thereby promoting APC-FZR1 dependent degradation of mitotic cyclins and subsequent exit from mitosis. Required for normal hearing. The protein is Dual specificity protein phosphatase CDC14A (Cdc14a) of Mus musculus (Mouse).